The following is a 389-amino-acid chain: Choline/ethanolaminephosphotransferase 1 (389 aa).

The chain crosses the membrane as a helical span at residues 40 to 60 (VFPLWMPPNMITLMGFMFLVT). Asn48 contributes to the CDP-choline binding site. Asp95 and Asp98 together coordinate Mg(2+). Residue Arg103 coordinates CDP-choline. A Mg(2+)-binding site is contributed by Asp116. His117 serves as the catalytic Proton acceptor. Asp120 serves as a coordination point for Mg(2+). 7 helical membrane-spanning segments follow: residues 141–161 (TFWF…EHYF), 176–196 (GLAL…EWWA), 221–241 (VLYM…VTNV), 252–272 (MVLA…VLIW), 280–300 (LIAT…GFLV), 322–344 (SLLY…GVPL), and 350–370 (VLLG…TSVI).

This sequence belongs to the CDP-alcohol phosphatidyltransferase class-I family. It depends on Mg(2+) as a cofactor. Requires Mn(2+) as cofactor.

The protein localises to the membrane. It carries out the reaction CDP-ethanolamine + a 1,2-diacyl-sn-glycerol = a 1,2-diacyl-sn-glycero-3-phosphoethanolamine + CMP + H(+). It catalyses the reaction CDP-choline + a 1,2-diacyl-sn-glycerol = a 1,2-diacyl-sn-glycero-3-phosphocholine + CMP + H(+). Its pathway is phospholipid metabolism; phosphatidylethanolamine biosynthesis; phosphatidylethanolamine from ethanolamine: step 3/3. The protein operates within phospholipid metabolism; phosphatidylcholine biosynthesis; phosphatidylcholine from phosphocholine: step 2/2. Functionally, catalyzes both phosphatidylcholine and phosphatidylethanolamine biosynthesis from CDP-choline and CDP-ethanolamine, respectively. Has a higher cholinephosphotransferase activity than ethanolaminephosphotransferase activity. This is Choline/ethanolaminephosphotransferase 1 (AAPT1) from Arabidopsis thaliana (Mouse-ear cress).